The sequence spans 144 residues: Large ribosomal subunit protein uL16 (144 aa).

It belongs to the universal ribosomal protein uL16 family. As to quaternary structure, part of the 50S ribosomal subunit.

Binds 23S rRNA and is also seen to make contacts with the A and possibly P site tRNAs. This chain is Large ribosomal subunit protein uL16, found in Bacillus cytotoxicus (strain DSM 22905 / CIP 110041 / 391-98 / NVH 391-98).